The sequence spans 477 residues: Pentatricopeptide repeat-containing protein At1g55630 (477 aa).

9 PPR repeats span residues 151-185 (TANC…GYPT), 186-220 (TACT…NYRP), 221-255 (YKHS…GFTP), 256-290 (DVLT…GFSP), 291-325 (DLYT…GVEP), 326-360 (GVIH…GCTP), 361-395 (DVVC…GQLP), 396-430 (NVFT…GCNP), and 431-465 (NFVV…GHYV).

This sequence belongs to the PPR family. P subfamily.

The chain is Pentatricopeptide repeat-containing protein At1g55630 from Arabidopsis thaliana (Mouse-ear cress).